Here is a 363-residue protein sequence, read N- to C-terminus: Peptide chain release factor 2 (363 aa).

Gln-251 carries the post-translational modification N5-methylglutamine.

The protein belongs to the prokaryotic/mitochondrial release factor family. In terms of processing, methylated by PrmC. Methylation increases the termination efficiency of RF2.

The protein resides in the cytoplasm. In terms of biological role, peptide chain release factor 2 directs the termination of translation in response to the peptide chain termination codons UGA and UAA. The sequence is that of Peptide chain release factor 2 from Helicobacter pylori (strain Shi470).